The chain runs to 153 residues: Probable inactive ribonuclease-like protein 13 (153 aa).

Residues 1–22 form the signal peptide; the sequence is MAPDVAWLLVLPLVFRPTLVTG.

This sequence belongs to the pancreatic ribonuclease family.

It is found in the secreted. In terms of biological role, does not exhibit any ribonuclease activity. The sequence is that of Probable inactive ribonuclease-like protein 13 (Rnase13) from Mus musculus (Mouse).